Consider the following 296-residue polypeptide: Bifunctional protein FolD (296 aa).

NADP(+) contacts are provided by residues 166–168, Ser191, and Ile232; that span reads GRS.

The protein belongs to the tetrahydrofolate dehydrogenase/cyclohydrolase family. In terms of assembly, homodimer.

The catalysed reaction is (6R)-5,10-methylene-5,6,7,8-tetrahydrofolate + NADP(+) = (6R)-5,10-methenyltetrahydrofolate + NADPH. It carries out the reaction (6R)-5,10-methenyltetrahydrofolate + H2O = (6R)-10-formyltetrahydrofolate + H(+). Its pathway is one-carbon metabolism; tetrahydrofolate interconversion. Catalyzes the oxidation of 5,10-methylenetetrahydrofolate to 5,10-methenyltetrahydrofolate and then the hydrolysis of 5,10-methenyltetrahydrofolate to 10-formyltetrahydrofolate. The protein is Bifunctional protein FolD of Cereibacter sphaeroides (strain ATCC 17029 / ATH 2.4.9) (Rhodobacter sphaeroides).